The sequence spans 447 residues: Tektin-4 (447 aa).

Coiled-coil stretches lie at residues 322–348 (LRKT…DKEA) and 375–423 (FRLL…TNSL).

This sequence belongs to the tektin family. In terms of assembly, microtubule inner protein component of sperm flagellar doublet microtubules. Ubiquitinated, leading to its degradation. Deubiquitinated by USP16, promoting its stability. In terms of tissue distribution, detected in testis, where it is weakly expressed in round spermatids, and strongly expressed in the flagellum of step 16 elongated spermatids (at protein level). Expressed in spermatozoa. In the sperm flagellum, localizes to the principal piece and midpiece (at protein level). Specifically expressed in testis; not detected in other tissues tested.

The protein resides in the cytoplasm. Its subcellular location is the cytoskeleton. It is found in the cilium axoneme. The protein localises to the flagellum axoneme. Functionally, microtubule inner protein (MIP) part of the dynein-decorated doublet microtubules (DMTs) in cilia and flagellar axoneme. Forms filamentous polymers in the walls of ciliary and flagellar microtubules. Contributes to normal sperm motility. This is Tektin-4 (Tekt4) from Mus musculus (Mouse).